We begin with the raw amino-acid sequence, 231 residues long: Cytochrome c oxidase assembly factor 7A (231 aa).

5 Sel1-like repeats span residues proline 34–glutamate 66, serine 68–glycine 104, isoleucine 108–phenylalanine 145, alanine 146–histidine 182, and valine 183–lysine 218.

Belongs to the hcp beta-lactamase family.

The protein resides in the mitochondrion intermembrane space. In terms of biological role, may be required for assembly of mitochondrial respiratory chain complexes. In Xenopus laevis (African clawed frog), this protein is Cytochrome c oxidase assembly factor 7A (coa7-a).